A 218-amino-acid polypeptide reads, in one-letter code: Histone H1 (218 aa).

Low complexity-rich tracts occupy residues 1–19 (MSET…GAKA) and 27–39 (AAGG…PAGP). Disordered stretches follow at residues 1 to 41 (MSET…GPSV) and 89 to 218 (VGKG…PKKK). Serine 2 is modified (N-acetylserine). The region spanning 37 to 110 (AGPSVTELIT…GASGSFKLNK (74 aa)) is the H15 domain. Basic residues-rich tracts occupy residues 119-133 (ATKK…KPAA), 141-158 (KKPK…KAKK), 166-184 (KAAK…KKAA), and 191-218 (KAVK…PKKK).

It belongs to the histone H1/H5 family.

It localises to the nucleus. Its subcellular location is the chromosome. In terms of biological role, histones H1 are necessary for the condensation of nucleosome chains into higher-order structures. This is Histone H1 from Anas platyrhynchos (Mallard).